Consider the following 127-residue polypeptide: Small ribosomal subunit protein uS12 (127 aa).

Aspartate 89 carries the post-translational modification 3-methylthioaspartic acid. Residues 101–127 form a disordered region; it reads ALDTSGVAGRTQRRSKYGAKRPKEAKK. Residues 111–127 are compositionally biased toward basic residues; sequence TQRRSKYGAKRPKEAKK.

The protein belongs to the universal ribosomal protein uS12 family. As to quaternary structure, part of the 30S ribosomal subunit. Contacts proteins S8 and S17. May interact with IF1 in the 30S initiation complex.

Its function is as follows. With S4 and S5 plays an important role in translational accuracy. In terms of biological role, interacts with and stabilizes bases of the 16S rRNA that are involved in tRNA selection in the A site and with the mRNA backbone. Located at the interface of the 30S and 50S subunits, it traverses the body of the 30S subunit contacting proteins on the other side and probably holding the rRNA structure together. The combined cluster of proteins S8, S12 and S17 appears to hold together the shoulder and platform of the 30S subunit. This is Small ribosomal subunit protein uS12 from Flavobacterium psychrophilum (strain ATCC 49511 / DSM 21280 / CIP 103535 / JIP02/86).